The sequence spans 104 residues: Transcription and mRNA export factor ENY2 (104 aa).

Over residues 1 to 14 the composition is skewed to basic and acidic residues; that stretch reads MADYGSDKKSRDNQ. The segment at 1 to 22 is disordered; sequence MADYGSDKKSRDNQMRSAINQQ.

It belongs to the ENY2 family. As to quaternary structure, component of the nuclear pore complex (NPC)-associated TREX-2 complex (transcription and export complex 2). Component of the SAGA transcription coactivator-HAT complex. Within the SAGA complex, participates in a subcomplex of SAGA called the DUB module (deubiquitination module).

It is found in the nucleus. The protein resides in the nucleoplasm. Functionally, involved in mRNA export coupled transcription activation by association with both the TREX-2 and the SAGA complexes. The transcription regulatory histone acetylation (HAT) complex SAGA is a multiprotein complex that activates transcription by remodeling chromatin and mediating histone acetylation and deubiquitination. Within the SAGA complex, participates in a subcomplex that specifically deubiquitinates histones. The SAGA complex is recruited to specific gene promoters by activators, where it is required for transcription. The TREX-2 complex functions in docking export-competent ribonucleoprotein particles (mRNPs) to the nuclear entrance of the nuclear pore complex (nuclear basket). TREX-2 participates in mRNA export and accurate chromatin positioning in the nucleus by tethering genes to the nuclear periphery. This Ciona intestinalis (Transparent sea squirt) protein is Transcription and mRNA export factor ENY2.